A 455-amino-acid polypeptide reads, in one-letter code: Keratin, type I cuticular Ha5 (455 aa).

The tract at residues 1 to 97 is head; sequence MASKCLKASF…FGEGILTGNE (97 aa). The IF rod domain maps to 97–408; the sequence is EKETMQFLND…GLLDSEDCKL (312 aa). The tract at residues 98-132 is coil 1A; it reads KETMQFLNDRLASYLEKVRQLERENAELESRIRDW. The segment at 133-143 is linker 1; sequence CEQQVPYLCPD. The tract at residues 144–244 is coil 1B; sequence YQSYFQTIEE…HEEEVNSLRC (101 aa). A linker 12 region spans residues 245–260; the sequence is QLGDRLNVEVDAAPPV. A coil 2 region spans residues 261 to 404; the sequence is DLNRVLNEMR…STYRGLLDSE (144 aa). Residues 405–455 are tail; that stretch reads DCKLPCNPCAPDHSPSKSCLPCLPAASCGPGTAHTTCSPRPICVSCPGSRF.

It belongs to the intermediate filament family.

In Ovis aries (Sheep), this protein is Keratin, type I cuticular Ha5.